The sequence spans 512 residues: V-type proton ATPase subunit B (512 aa).

ATP is bound at residue Arg381. The tract at residues 484–512 (LYGRDREQDDDEDEDEEDPDKSGDKLIDA) is disordered. Positions 491–502 (QDDDEDEDEEDP) are enriched in acidic residues. Residues 503 to 512 (DKSGDKLIDA) are compositionally biased toward basic and acidic residues.

The protein belongs to the ATPase alpha/beta chains family. As to quaternary structure, V-ATPase is a heteromultimeric enzyme composed of a peripheral catalytic V1 complex (components A to H) attached to an integral membrane V0 proton pore complex (components: a, c, c', c'', d, e, f and VOA1).

It is found in the vacuole membrane. Functionally, non-catalytic subunit of the V1 complex of vacuolar(H+)-ATPase (V-ATPase), a multisubunit enzyme composed of a peripheral complex (V1) that hydrolyzes ATP and a membrane integral complex (V0) that translocates protons. Plays an important role in resistance to several stresses, as well as in autophagy and virulence. This Candida albicans (strain SC5314 / ATCC MYA-2876) (Yeast) protein is V-type proton ATPase subunit B.